Consider the following 143-residue polypeptide: Mite group 2 allergen Pso o 2 (143 aa).

Residues 1 to 17 (MMKTLVVLAITLAVVSA) form the signal peptide. Intrachain disulfides connect C25/C134, C38/C43, and C89/C94.

It belongs to the NPC2 family.

The protein localises to the secreted. In Psoroptes ovis (Sheep scab mite), this protein is Mite group 2 allergen Pso o 2 (ALLA).